The primary structure comprises 890 residues: Alanine--tRNA ligase (890 aa).

Residues histidine 573, histidine 577, cysteine 676, and histidine 680 each contribute to the Zn(2+) site.

Belongs to the class-II aminoacyl-tRNA synthetase family. The cofactor is Zn(2+).

It is found in the cytoplasm. The catalysed reaction is tRNA(Ala) + L-alanine + ATP = L-alanyl-tRNA(Ala) + AMP + diphosphate. Functionally, catalyzes the attachment of alanine to tRNA(Ala) in a two-step reaction: alanine is first activated by ATP to form Ala-AMP and then transferred to the acceptor end of tRNA(Ala). Also edits incorrectly charged Ser-tRNA(Ala) and Gly-tRNA(Ala) via its editing domain. This Corynebacterium efficiens (strain DSM 44549 / YS-314 / AJ 12310 / JCM 11189 / NBRC 100395) protein is Alanine--tRNA ligase.